The chain runs to 556 residues: Potassium-transporting ATPase potassium-binding subunit (556 aa).

10 consecutive transmembrane segments (helical) span residues 6 to 26 (AGLIFLAVLVAALVAVHVPLG), 65 to 85 (GVLAFSSVSIIFLFVLQLVQG), 133 to 153 (GLAVQNFVSAAVGMAVAVALV), 176 to 196 (LRILLPISIVGAVLLVAGGAI), 249 to 269 (PTAWTNWLEVFLILVIGFSLP), 283 to 303 (YAIASVMASLYLLSTGFMLWF), 378 to 398 (GLYGMLVLAVITVFVAGLMVG), 419 to 439 (YFLVTPLIVLTGTAIAMALPG), 483 to 503 (ALGLAMAFGRFLPIVLVLALA), and 526 to 546 (FVGMVAGVTLIVVALTFLPML).

Belongs to the KdpA family. The system is composed of three essential subunits: KdpA, KdpB and KdpC.

The protein resides in the cell membrane. In terms of biological role, part of the high-affinity ATP-driven potassium transport (or Kdp) system, which catalyzes the hydrolysis of ATP coupled with the electrogenic transport of potassium into the cytoplasm. This subunit binds the extracellular potassium ions and delivers the ions to the membrane domain of KdpB through an intramembrane tunnel. The protein is Potassium-transporting ATPase potassium-binding subunit of Mycolicibacterium paratuberculosis (strain ATCC BAA-968 / K-10) (Mycobacterium paratuberculosis).